The following is a 121-amino-acid chain: Large ribosomal subunit protein uL14 (121 aa).

The protein belongs to the universal ribosomal protein uL14 family. As to quaternary structure, part of the 50S ribosomal subunit. Forms a cluster with proteins L3 and L19. In the 70S ribosome, L14 and L19 interact and together make contacts with the 16S rRNA in bridges B5 and B8.

In terms of biological role, binds to 23S rRNA. Forms part of two intersubunit bridges in the 70S ribosome. This chain is Large ribosomal subunit protein uL14, found in Azobacteroides pseudotrichonymphae genomovar. CFP2.